A 275-amino-acid chain; its full sequence is Ribosomal RNA small subunit methyltransferase A (275 aa).

6 residues coordinate S-adenosyl-L-methionine: Asn21, Leu23, Gly48, Glu69, Asp94, and Asn115.

It belongs to the class I-like SAM-binding methyltransferase superfamily. rRNA adenine N(6)-methyltransferase family. RsmA subfamily.

The protein localises to the cytoplasm. It carries out the reaction adenosine(1518)/adenosine(1519) in 16S rRNA + 4 S-adenosyl-L-methionine = N(6)-dimethyladenosine(1518)/N(6)-dimethyladenosine(1519) in 16S rRNA + 4 S-adenosyl-L-homocysteine + 4 H(+). Functionally, specifically dimethylates two adjacent adenosines (A1518 and A1519) in the loop of a conserved hairpin near the 3'-end of 16S rRNA in the 30S particle. May play a critical role in biogenesis of 30S subunits. The sequence is that of Ribosomal RNA small subunit methyltransferase A from Clostridium botulinum (strain Kyoto / Type A2).